The chain runs to 104 residues: Putative heat shock protein PS1 (104 aa).

N11 and N18 each carry an N-linked (GlcNAc...) asparagine glycan. Residue N18 participates in ATP binding.

Belongs to the heat shock protein 90 family. Homodimer.

Its subcellular location is the cytoplasm. Its function is as follows. Putative molecular chaperone that may promote the maturation, structural maintenance and proper regulation of specific target proteins. In Pinus strobus (Eastern white pine), this protein is Putative heat shock protein PS1.